We begin with the raw amino-acid sequence, 1238 residues long: Cryptic loci regulator protein 1 (1238 aa).

Disordered stretches follow at residues 133–156, 196–237, 277–303, 546–568, 696–735, and 784–824; these read TQQQ…TEPN, PFSN…PSSI, ASLY…LGSM, QKSV…IDTT, SDNT…PFVH, and TLKE…QSRS. The segment covering 214–223 has biased composition (polar residues); sequence NVKNNSKKTA. Residues 224–237 are compositionally biased toward low complexity; sequence SSVNSNHSSIPSSI. Over residues 291–303 the composition is skewed to polar residues; sequence SSRNTSSYNLGSM. The segment covering 702-723 has biased composition (low complexity); the sequence is SLPKPSNSKLSSISSDGDASSN. Positions 785 to 796 are enriched in basic and acidic residues; it reads LKEDASSTKQAK. Polar residues predominate over residues 810–819; sequence NDVSKNNSGE. Residues 1062-1087 form a C2H2-type zinc finger; it reads LNCEVSNCKKCFSNYEDMFKHLQHSH.

Interacts with clr3.

It is found in the nucleus. Its subcellular location is the chromosome. The protein localises to the centromere. The protein resides in the telomere. Functionally, regulates silencing of the mat2 and mat3 loci. Organizes the chromatin structure of the mating-type region where it also participates in establishing the 'cold spot' for recombination. Required for proper positioning of nucleosomes at heterochromatic loci and for transcriptional gene silencing (TGS) function of the Snf2/Hdac-containing repressor complex (SHREC). The polypeptide is Cryptic loci regulator protein 1 (clr1) (Schizosaccharomyces pombe (strain 972 / ATCC 24843) (Fission yeast)).